A 365-amino-acid chain; its full sequence is Cobalt-precorrin-5B C(1)-methyltransferase (365 aa).

Belongs to the CbiD family.

It carries out the reaction Co-precorrin-5B + S-adenosyl-L-methionine = Co-precorrin-6A + S-adenosyl-L-homocysteine. It participates in cofactor biosynthesis; adenosylcobalamin biosynthesis; cob(II)yrinate a,c-diamide from sirohydrochlorin (anaerobic route): step 6/10. In terms of biological role, catalyzes the methylation of C-1 in cobalt-precorrin-5B to form cobalt-precorrin-6A. The protein is Cobalt-precorrin-5B C(1)-methyltransferase of Geobacillus sp. (strain WCH70).